The following is a 144-amino-acid chain: Large ribosomal subunit protein uL11 (144 aa).

This sequence belongs to the universal ribosomal protein uL11 family. As to quaternary structure, part of the ribosomal stalk of the 50S ribosomal subunit. Interacts with L10 and the large rRNA to form the base of the stalk. L10 forms an elongated spine to which L12 dimers bind in a sequential fashion forming a multimeric L10(L12)X complex. Post-translationally, one or more lysine residues are methylated.

Its function is as follows. Forms part of the ribosomal stalk which helps the ribosome interact with GTP-bound translation factors. This Deinococcus geothermalis (strain DSM 11300 / CIP 105573 / AG-3a) protein is Large ribosomal subunit protein uL11.